Here is a 256-residue protein sequence, read N- to C-terminus: Tryptophan synthase alpha chain (256 aa).

Catalysis depends on proton acceptor residues Glu-48 and Asp-59.

It belongs to the TrpA family. In terms of assembly, tetramer of two alpha and two beta chains.

The catalysed reaction is (1S,2R)-1-C-(indol-3-yl)glycerol 3-phosphate + L-serine = D-glyceraldehyde 3-phosphate + L-tryptophan + H2O. It participates in amino-acid biosynthesis; L-tryptophan biosynthesis; L-tryptophan from chorismate: step 5/5. Functionally, the alpha subunit is responsible for the aldol cleavage of indoleglycerol phosphate to indole and glyceraldehyde 3-phosphate. This is Tryptophan synthase alpha chain from Caldicellulosiruptor bescii (strain ATCC BAA-1888 / DSM 6725 / KCTC 15123 / Z-1320) (Anaerocellum thermophilum).